The chain runs to 278 residues: Probable ribosomal RNA small subunit methyltransferase A (278 aa).

S-adenosyl-L-methionine contacts are provided by Asn-23, Leu-25, Gly-50, Glu-71, Asp-95, and Asn-110.

Belongs to the class I-like SAM-binding methyltransferase superfamily. rRNA adenine N(6)-methyltransferase family. RsmA subfamily.

The protein resides in the cytoplasm. Its function is as follows. Specifically dimethylates two adjacent adenosines in the loop of a conserved hairpin near the 3'-end of 16S rRNA in the 30S particle. May play a critical role in biogenesis of 30S subunits. This is Probable ribosomal RNA small subunit methyltransferase A from Thermococcus gammatolerans (strain DSM 15229 / JCM 11827 / EJ3).